Reading from the N-terminus, the 126-residue chain is Late histone H2A.L3 (126 aa).

Residues 1-20 (MSGRGKGAGKARAKAKSRSA) form a disordered region. Ser-2 carries the N-acetylserine modification. Ser-2 carries the post-translational modification Phosphoserine. The segment covering 7-19 (GAGKARAKAKSRS) has biased composition (basic residues). Gln-105 carries the N5-methylglutamine modification. Residue Lys-120 forms a Glycyl lysine isopeptide (Lys-Gly) (interchain with G-Cter in ubiquitin) linkage.

This sequence belongs to the histone H2A family. In terms of assembly, the nucleosome is a histone octamer containing two molecules each of H2A, H2B, H3 and H4 assembled in one H3-H4 heterotetramer and two H2A-H2B heterodimers. The octamer wraps approximately 147 bp of DNA. Post-translationally, monoubiquitination of Lys-120 gives a specific tag for epigenetic transcriptional repression. In terms of processing, phosphorylation of Ser-2 directly represses transcription.

The protein localises to the nucleus. The protein resides in the chromosome. Core component of nucleosome. Nucleosomes wrap and compact DNA into chromatin, limiting DNA accessibility to the cellular machineries which require DNA as a template. Histones thereby play a central role in transcription regulation, DNA repair, DNA replication and chromosomal stability. DNA accessibility is regulated via a complex set of post-translational modifications of histones, also called histone code, and nucleosome remodeling. This chain is Late histone H2A.L3, found in Strongylocentrotus purpuratus (Purple sea urchin).